The chain runs to 131 residues: Encapsulated ferritin-like protein (131 aa).

The Fe cation site is built by Glu-30, Glu-60, and His-63. Positions 96 to 131 (EEEDTGSSSSVAASPTSAPSHGSLGIGSLRQEGKED) are disordered. The interval 98 to 131 (EDTGSSSSVAASPTSAPSHGSLGIGSLRQEGKED) is targeting peptide. Residues 102-115 (SSSSVAASPTSAPS) are compositionally biased toward low complexity.

It belongs to the ferritin-like superfamily. EncFtn family. In terms of assembly, forms dimers at all pH tested; under acidic conditions formes decamers. The N-terminal domain (residues 1-97) crystallizes as a decameric ring. Four decamers are loaded in the encapsulin nanocompartment in a tetrahedral arrangement. A 3 nm gap is consistently seen between the shell and the cargo. The target peptide extends away from the decameric ring, to allow binding to the interior of the encapsulin nanocompartment shell.

The protein localises to the encapsulin nanocompartment. The catalysed reaction is 4 Fe(2+) + O2 + 4 H(+) = 4 Fe(3+) + 2 H2O. The ferroxidase activity is inhibited by zinc. In terms of biological role, cargo protein of a type 1 encapsulin nanocompartment. A ferritin-like ferroxidase that converts Fe(2+) to Fe(3+) iron inside the encapsulin nanocompartment. Mineralized Fe(3+) is released to the exterior of the decameric complex for deposition in the encapsulin nanocompartment. In solution the decamer binds 10-15 iron cations; in the encapsulin nanocompartment the decamer can bind up to 48 ions, perhaps via its internal channel, and on its exterior. The cargo-loaded nanocompartment maximally sequesters up to 4150 Fe ions. This Haliangium ochraceum (strain DSM 14365 / JCM 11303 / SMP-2) protein is Encapsulated ferritin-like protein.